The primary structure comprises 1001 residues: Serine/threonine-protein kinase TAO1-A (1001 aa).

The Protein kinase domain occupies 28–281 (FSDLREIGHG…SDELLKNMFV (254 aa)). ATP-binding positions include 34 to 42 (IGHGSFGAV) and lysine 57. Aspartate 151 functions as the Proton acceptor in the catalytic mechanism. Disordered stretches follow at residues 324-431 (PAVE…HKSH) and 567-586 (KEELNENQSTPKKEKQEWLS). Residues 350–370 (SNQSIPSMSISASSQSSSVTS) show a composition bias toward low complexity. Composition is skewed to basic and acidic residues over residues 375–388 (SDDKSELDMMEGDH) and 577–586 (PKKEKQEWLS). Coiled coils occupy residues 458-651 (SELR…EHAM) and 754-877 (KAVL…EIEA). A disordered region spans residues 911-1001 (SHNPTGGPGP…ISNGSRMSYT (91 aa)). Positions 921 to 930 (HWGHPMAGPP) are enriched in low complexity. Polar residues-rich tracts occupy residues 949-967 (GSVQGVSRGSTMGVRNSPQ) and 974-1001 (SGGQTEQGMSRSTSVTSQISNGSRMSYT).

It belongs to the protein kinase superfamily. STE Ser/Thr protein kinase family. STE20 subfamily.

The protein localises to the cytoplasm. The enzyme catalyses L-seryl-[protein] + ATP = O-phospho-L-seryl-[protein] + ADP + H(+). The catalysed reaction is L-threonyl-[protein] + ATP = O-phospho-L-threonyl-[protein] + ADP + H(+). Its function is as follows. Serine/threonine-protein kinase involved in various processes such as p38/mapk14 stress-activated MAPK cascade, DNA damage response and regulation of cytoskeleton stability. Acts as an activator of the p38/MAPK14 stress-activated MAPK cascade by mediating phosphorylation and subsequent activation of upstream MAP kinase kinases. In response to DNA damage, involved in the G2/M transition DNA damage checkpoint by activating the p38/MAPK14 stress-activated MAPK cascade. This chain is Serine/threonine-protein kinase TAO1-A (taok1-a), found in Xenopus laevis (African clawed frog).